We begin with the raw amino-acid sequence, 404 residues long: Cysteine desulfurase IscS (404 aa).

Residues 75–76, Asn155, Gln183, and 203–205 contribute to the pyridoxal 5'-phosphate site; these read AT and TGH. Position 206 is an N6-(pyridoxal phosphate)lysine (Lys206). Residue Thr243 participates in pyridoxal 5'-phosphate binding. Cys328 acts as the Cysteine persulfide intermediate in catalysis. Cys328 serves as a coordination point for [2Fe-2S] cluster.

The protein belongs to the class-V pyridoxal-phosphate-dependent aminotransferase family. NifS/IscS subfamily. Homodimer. Forms a heterotetramer with IscU, interacts with other sulfur acceptors. Pyridoxal 5'-phosphate serves as cofactor.

The protein localises to the cytoplasm. The catalysed reaction is (sulfur carrier)-H + L-cysteine = (sulfur carrier)-SH + L-alanine. It participates in cofactor biosynthesis; iron-sulfur cluster biosynthesis. In terms of biological role, master enzyme that delivers sulfur to a number of partners involved in Fe-S cluster assembly, tRNA modification or cofactor biosynthesis. Catalyzes the removal of elemental sulfur atoms from cysteine to produce alanine. Functions as a sulfur delivery protein for Fe-S cluster synthesis onto IscU, an Fe-S scaffold assembly protein, as well as other S acceptor proteins. The chain is Cysteine desulfurase IscS from Cronobacter sakazakii (strain ATCC BAA-894) (Enterobacter sakazakii).